The primary structure comprises 88 residues: Sec-independent protein translocase protein TatA (88 aa).

The helical transmembrane segment at 3–23 (IFGVGLPEVTVILILALLIFG) threads the bilayer. The segment at 56-88 (MNEQDKDESPISIESNQTNEINQEKIDSENSKK) is disordered. Residues 67-76 (SIESNQTNEI) show a composition bias toward polar residues. Over residues 77–88 (NQEKIDSENSKK) the composition is skewed to basic and acidic residues.

This sequence belongs to the TatA/E family. Forms a complex with TatC.

The protein localises to the cell inner membrane. In terms of biological role, part of the twin-arginine translocation (Tat) system that transports large folded proteins containing a characteristic twin-arginine motif in their signal peptide across membranes. TatA could form the protein-conducting channel of the Tat system. The sequence is that of Sec-independent protein translocase protein TatA from Prochlorococcus marinus (strain AS9601).